Here is a 581-residue protein sequence, read N- to C-terminus: MKATLLPSLLALSLTLCLALGLSSSGVLVRADAFASSQPPVVSDPVLASQHLTQANVALQSGRYQDALSAFDLALQADPSSWLTYYRRATAQLSLGRTSAALQDFQSLLKLNPKFDKAYLQQAKVYLKEGDCDKAKQALKTYDSIRAEKGAANSSPAEANSVRSKLTLVETSIKSLGQLVKELDKAQKADKKGKAKELDSTKVDHCIHLAGEVLKISPSHLETRLVRARCQTMKGRIEDAMADWTRAVHLTPSPFLLRRLSVLSYFVVSEPGSQSRDAGLQHLKACLHSDPDNKSCAKMHRKIKALEKSLKKARNFYNSQSYRAVLSALKGGKVGRATVVDDIKEAIRSATEVQSGDEEPLIPSTYKGDPVQESGLLLELHTMYCKAYTELNDMDKAMPYCELVLAKDPDNVEATLARAELALQREDYDQAVRDLTKAFDASGRTDRAIHQKLQTAQKRLKLSQSKDYYKVLGVKRTDSLATIKKAYRKMARENHPDKGGSQEKMAQINEAWGVLGDEELRKKYDQGDDPNDPMGGQQGGYGNPFAQGGHPFDMFFQQQAGFGGFPGGGFPGGQQFHFKMG.

The N-terminal stretch at 1–19 (MKATLLPSLLALSLTLCLA) is a signal peptide. TPR repeat units follow at residues 48 to 81 (ASQH…DPSS), 82 to 115 (WLTY…NPKF), 116 to 149 (DKAY…RAEK), 221 to 254 (LETR…TPSP), 257 to 293 (LRRL…DPDN), 378 to 411 (LELH…DPDN), and 412 to 445 (VEAT…SGRT). N-linked (GlcNAc...) asparagine glycosylation is present at Asn-293. One can recognise a J domain in the interval 467–528 (DYYKVLGVKR…ELRKKYDQGD (62 aa)). A disordered region spans residues 522-544 (KKYDQGDDPNDPMGGQQGGYGNP).

As to quaternary structure, interacts with the ER chaperone BIP1.

It is found in the endoplasmic reticulum lumen. In terms of biological role, endoplasmic reticulum (ER) protein that functions as a co-chaperone for BIP1 during ER stress. Might be specifically involved in the refolding of N-glycosylated proteins. This is Tetratricopeptide repeat and J domain-containing co-chaperone DNJ1 from Mycosarcoma maydis (Corn smut fungus).